Reading from the N-terminus, the 105-residue chain is UPF0235 protein CT1832 (105 aa).

This sequence belongs to the UPF0235 family.

The chain is UPF0235 protein CT1832 from Chlorobaculum tepidum (strain ATCC 49652 / DSM 12025 / NBRC 103806 / TLS) (Chlorobium tepidum).